Here is a 174-residue protein sequence, read N- to C-terminus: Gamma-crystallin E (174 aa).

2 Beta/gamma crystallin 'Greek key' domains span residues 2 to 40 (GKIT…RVDS) and 41 to 83 (GCWM…RLIP). Residues 84–87 (HSSS) form a connecting peptide region. 2 consecutive Beta/gamma crystallin 'Greek key' domains span residues 88–128 (HRIK…HVME) and 129–171 (GYWV…RRIM).

This sequence belongs to the beta/gamma-crystallin family. Detected in the superior olivary complex of the auditory hindbrain.

In terms of biological role, crystallins are the dominant structural components of the vertebrate eye lens. In Mus musculus (Mouse), this protein is Gamma-crystallin E (Cryge).